Reading from the N-terminus, the 654-residue chain is Acetyl-coenzyme A synthetase (654 aa).

Residues 190 to 193 and Thr-313 each bind CoA; that span reads RGGK. Residues 389–391, 413–418, Asp-504, and Arg-519 contribute to the ATP site; these read GEP and DTWWQT. Ser-527 serves as a coordination point for CoA. Position 530 (Arg-530) interacts with ATP. Residues Val-541 and Val-546 each coordinate Mg(2+). The residue at position 613 (Lys-613) is an N6-acetyllysine.

The protein belongs to the ATP-dependent AMP-binding enzyme family. Mg(2+) serves as cofactor. Post-translationally, acetylated. Deacetylation by the SIR2-homolog deacetylase activates the enzyme.

The catalysed reaction is acetate + ATP + CoA = acetyl-CoA + AMP + diphosphate. Its function is as follows. Catalyzes the conversion of acetate into acetyl-CoA (AcCoA), an essential intermediate at the junction of anabolic and catabolic pathways. AcsA undergoes a two-step reaction. In the first half reaction, AcsA combines acetate with ATP to form acetyl-adenylate (AcAMP) intermediate. In the second half reaction, it can then transfer the acetyl group from AcAMP to the sulfhydryl group of CoA, forming the product AcCoA. This Leptospira borgpetersenii serovar Hardjo-bovis (strain L550) protein is Acetyl-coenzyme A synthetase.